We begin with the raw amino-acid sequence, 422 residues long: Serine hydroxymethyltransferase (422 aa).

(6S)-5,6,7,8-tetrahydrofolate-binding positions include Leu-121 and 125–127 (GHL). Residue Lys-230 is modified to N6-(pyridoxal phosphate)lysine. Residue 355–357 (SPF) participates in (6S)-5,6,7,8-tetrahydrofolate binding.

The protein belongs to the SHMT family. As to quaternary structure, homodimer. Requires pyridoxal 5'-phosphate as cofactor.

It localises to the cytoplasm. The enzyme catalyses (6R)-5,10-methylene-5,6,7,8-tetrahydrofolate + glycine + H2O = (6S)-5,6,7,8-tetrahydrofolate + L-serine. It participates in one-carbon metabolism; tetrahydrofolate interconversion. It functions in the pathway amino-acid biosynthesis; glycine biosynthesis; glycine from L-serine: step 1/1. In terms of biological role, catalyzes the reversible interconversion of serine and glycine with tetrahydrofolate (THF) serving as the one-carbon carrier. This reaction serves as the major source of one-carbon groups required for the biosynthesis of purines, thymidylate, methionine, and other important biomolecules. Also exhibits THF-independent aldolase activity toward beta-hydroxyamino acids, producing glycine and aldehydes, via a retro-aldol mechanism. This is Serine hydroxymethyltransferase from Teredinibacter turnerae (strain ATCC 39867 / T7901).